Here is a 551-residue protein sequence, read N- to C-terminus: Membrane protein insertase YidC (551 aa).

The chain crosses the membrane as a helical span at residues 3–23; that stretch reads ANHIRILLLVTIAIMFISLMG. The span at 33–47 shows a compositional bias: polar residues; the sequence is NTKQQTSATQNNSHY. The segment at 33-59 is disordered; sequence NTKQQTSATQNNSHYDNADSSTNTDVT. Low complexity predominate over residues 50-59; the sequence is ADSSTNTDVT. 3 helical membrane-spanning segments follow: residues 361–381, 431–451, and 504–524; these read LVGNWGLAIILVTCLIKLIFY, LSGCLPMLIQIPIFISLYWVL, and VMMFLPVIFTFLFASFPSGLV.

The protein belongs to the OXA1/ALB3/YidC family. Type 1 subfamily. Interacts with the Sec translocase complex via SecD. Specifically interacts with transmembrane segments of nascent integral membrane proteins during membrane integration.

The protein resides in the cell inner membrane. Required for the insertion and/or proper folding and/or complex formation of integral membrane proteins into the membrane. Involved in integration of membrane proteins that insert both dependently and independently of the Sec translocase complex, as well as at least some lipoproteins. Aids folding of multispanning membrane proteins. In Francisella tularensis subsp. tularensis (strain SCHU S4 / Schu 4), this protein is Membrane protein insertase YidC.